The following is a 97-amino-acid chain: UPF0298 protein MGAS9429_Spy0329 (97 aa).

The protein belongs to the UPF0298 family.

It localises to the cytoplasm. In Streptococcus pyogenes serotype M12 (strain MGAS9429), this protein is UPF0298 protein MGAS9429_Spy0329.